Consider the following 239-residue polypeptide: Fatty acid metabolism regulator protein (239 aa).

One can recognise an HTH gntR-type domain in the interval 6 to 74; it reads KGPASFAEKY…HGKPTQVNNF (69 aa). The H-T-H motif DNA-binding region spans 34–53; it reads ERELSELIGVTRTTLREVLQ.

As to quaternary structure, homodimer.

It localises to the cytoplasm. Functionally, multifunctional regulator of fatty acid metabolism. This is Fatty acid metabolism regulator protein from Shewanella denitrificans (strain OS217 / ATCC BAA-1090 / DSM 15013).